The sequence spans 300 residues: MSTPFVTTLSPSLHGLLKDRLEEKGFIFTQPQHTIFQARSPSVSCTLYNSGKLVVQGKGAQEFIDFFLEPEILLTFTHNRMEKDLRPRLGVDESGKGDFFGPLCIAGVYARDAETLKNLYKTKIQDSKMLNDNQILALAKTIRACSTYDVMILYPEKYNELYAKFHNLNLLLAWAHATIIDQLAPRPSGEVFAISDQFASSESVLLQALRKKSTDISVIQKVRAEQDIVVAAASILAREAFIHTITKLEQRFSVKLPKGASAHVKSAGKTILNTQGKEILSLVCKTHFKTFYEICDSTDI.

The 215-residue stretch at 86-300 (RPRLGVDESG…FYEICDSTDI (215 aa)) folds into the RNase H type-2 domain. Residues Asp-92, Glu-93, and Asp-196 each coordinate a divalent metal cation.

This sequence belongs to the RNase HII family. RnhC subfamily. Requires Mn(2+) as cofactor. Mg(2+) is required as a cofactor.

The protein resides in the cytoplasm. It carries out the reaction Endonucleolytic cleavage to 5'-phosphomonoester.. Endonuclease that specifically degrades the RNA of RNA-DNA hybrids. The polypeptide is Ribonuclease HIII (Chlamydia abortus (strain DSM 27085 / S26/3) (Chlamydophila abortus)).